The sequence spans 168 residues: uncharacterized protein (168 aa).

This is an uncharacterized protein from Saccharomyces cerevisiae (strain ATCC 204508 / S288c) (Baker's yeast).